The chain runs to 947 residues: Testis-expressed protein 11 (947 aa).

The protein belongs to the SPO22 family. Interacts with SYCP2. Interacts with PBXIP1; may prevent interaction between PBXIP1 and ESR2. Interacts with SHOC1. Interacts with REDIC1. As to expression, testis-specific.

The protein resides in the chromosome. Regulator of crossing-over during meiosis. Involved in initiation and/or maintenance of chromosome synapsis and formation of crossovers. The sequence is that of Testis-expressed protein 11 (Tex11) from Mus musculus (Mouse).